The following is a 139-amino-acid chain: ATP synthase epsilon chain (139 aa).

A disordered region spans residues E89–R110.

It belongs to the ATPase epsilon chain family. F-type ATPases have 2 components, CF(1) - the catalytic core - and CF(0) - the membrane proton channel. CF(1) has five subunits: alpha(3), beta(3), gamma(1), delta(1), epsilon(1). CF(0) has three main subunits: a, b and c.

It is found in the cell membrane. Functionally, produces ATP from ADP in the presence of a proton gradient across the membrane. The sequence is that of ATP synthase epsilon chain from Chloroflexus aurantiacus (strain ATCC 29366 / DSM 635 / J-10-fl).